The sequence spans 723 residues: Polyribonucleotide nucleotidyltransferase (723 aa).

The Mg(2+) site is built by Asp497 and Asp503. The 60-residue stretch at 564–623 (PRLLSFRIDPELIGTVIGPGGRTIKGITERTNTKIDIEDGGIVTIASHDGAAAEAAQRII) folds into the KH domain. The region spanning 633-701 (GEVFTGTITR…NRGRINLTLR (69 aa)) is the S1 motif domain. The interval 701–723 (RGVPQNGEETQSEPAPTPVAPLN) is disordered.

Belongs to the polyribonucleotide nucleotidyltransferase family. The cofactor is Mg(2+).

It localises to the cytoplasm. The enzyme catalyses RNA(n+1) + phosphate = RNA(n) + a ribonucleoside 5'-diphosphate. Its function is as follows. Involved in mRNA degradation. Catalyzes the phosphorolysis of single-stranded polyribonucleotides processively in the 3'- to 5'-direction. The protein is Polyribonucleotide nucleotidyltransferase of Prochlorococcus marinus (strain MIT 9313).